Reading from the N-terminus, the 459-residue chain is Bifunctional protein GlmU (459 aa).

Residues 1–230 (MSNRFAVILA…FDETLGVNDR (230 aa)) are pyrophosphorylase. UDP-N-acetyl-alpha-D-glucosamine-binding positions include 9–12 (LAAG), Lys-23, Gln-73, and 78–79 (GT). Residue Asp-103 coordinates Mg(2+). The UDP-N-acetyl-alpha-D-glucosamine site is built by Gly-140, Glu-155, Asn-170, and Asn-228. Asn-228 is a binding site for Mg(2+). The interval 231-251 (VALSQAEIIMKNRINRKNMVN) is linker. The N-acetyltransferase stretch occupies residues 252–459 (GVTIIDPSNT…VDQLLNKKKS (208 aa)). UDP-N-acetyl-alpha-D-glucosamine contacts are provided by Arg-333 and Lys-351. His-363 serves as the catalytic Proton acceptor. 2 residues coordinate UDP-N-acetyl-alpha-D-glucosamine: Tyr-366 and Asn-377. Acetyl-CoA contacts are provided by residues 386–387 (NY), Ala-423, and Arg-440.

It in the N-terminal section; belongs to the N-acetylglucosamine-1-phosphate uridyltransferase family. This sequence in the C-terminal section; belongs to the transferase hexapeptide repeat family. Homotrimer. Requires Mg(2+) as cofactor.

The protein localises to the cytoplasm. It carries out the reaction alpha-D-glucosamine 1-phosphate + acetyl-CoA = N-acetyl-alpha-D-glucosamine 1-phosphate + CoA + H(+). It catalyses the reaction N-acetyl-alpha-D-glucosamine 1-phosphate + UTP + H(+) = UDP-N-acetyl-alpha-D-glucosamine + diphosphate. The protein operates within nucleotide-sugar biosynthesis; UDP-N-acetyl-alpha-D-glucosamine biosynthesis; N-acetyl-alpha-D-glucosamine 1-phosphate from alpha-D-glucosamine 6-phosphate (route II): step 2/2. Its pathway is nucleotide-sugar biosynthesis; UDP-N-acetyl-alpha-D-glucosamine biosynthesis; UDP-N-acetyl-alpha-D-glucosamine from N-acetyl-alpha-D-glucosamine 1-phosphate: step 1/1. It functions in the pathway bacterial outer membrane biogenesis; LPS lipid A biosynthesis. Catalyzes the last two sequential reactions in the de novo biosynthetic pathway for UDP-N-acetylglucosamine (UDP-GlcNAc). The C-terminal domain catalyzes the transfer of acetyl group from acetyl coenzyme A to glucosamine-1-phosphate (GlcN-1-P) to produce N-acetylglucosamine-1-phosphate (GlcNAc-1-P), which is converted into UDP-GlcNAc by the transfer of uridine 5-monophosphate (from uridine 5-triphosphate), a reaction catalyzed by the N-terminal domain. This chain is Bifunctional protein GlmU, found in Bacillus thuringiensis subsp. konkukian (strain 97-27).